The primary structure comprises 150 residues: Large ribosomal subunit protein bL9 (150 aa).

This sequence belongs to the bacterial ribosomal protein bL9 family.

In terms of biological role, binds to the 23S rRNA. This Shewanella sediminis (strain HAW-EB3) protein is Large ribosomal subunit protein bL9.